Consider the following 356-residue polypeptide: 4-hydroxybenzoate polyprenyltransferase, mitochondrial (356 aa).

The transit peptide at 1–44 (MITRSIGIARRSNSINCIVGSNTSTSYSLDESTKRWISTSTKQP) directs the protein to the mitochondrion. A run of 6 helical transmembrane segments spans residues 71–91 (VDKP…IAMA), 93–113 (PAGQ…AFLM), 150–170 (AIGL…QLNW), 195–215 (WPQF…WCAL), 269–289 (WLSA…IASD), and 332–352 (IILF…QILI).

The protein belongs to the UbiA prenyltransferase family. It depends on Mg(2+) as a cofactor.

It is found in the mitochondrion inner membrane. It carries out the reaction an all-trans-polyprenyl diphosphate + 4-hydroxybenzoate = a 4-hydroxy-3-(all-trans-polyprenyl)benzoate + diphosphate. It participates in cofactor biosynthesis; ubiquinone biosynthesis. Functionally, catalyzes the prenylation of para-hydroxybenzoate (PHB) with an all-trans polyprenyl group. Mediates the second step in the final reaction sequence of coenzyme Q (CoQ) biosynthesis, which is the condensation of the polyisoprenoid side chain with PHB, generating the first membrane-bound Q intermediate. The sequence is that of 4-hydroxybenzoate polyprenyltransferase, mitochondrial (coq-2) from Caenorhabditis elegans.